An 84-amino-acid polypeptide reads, in one-letter code: Small ribosomal subunit protein bS20 (84 aa).

It belongs to the bacterial ribosomal protein bS20 family.

Functionally, binds directly to 16S ribosomal RNA. The polypeptide is Small ribosomal subunit protein bS20 (Limosilactobacillus fermentum (strain NBRC 3956 / LMG 18251) (Lactobacillus fermentum)).